The sequence spans 309 residues: Homoserine kinase (309 aa).

85-95 contacts ATP; sequence PYGLGLGSSGS.

It belongs to the GHMP kinase family. Homoserine kinase subfamily.

It localises to the cytoplasm. It catalyses the reaction L-homoserine + ATP = O-phospho-L-homoserine + ADP + H(+). The protein operates within amino-acid biosynthesis; L-threonine biosynthesis; L-threonine from L-aspartate: step 4/5. Functionally, catalyzes the ATP-dependent phosphorylation of L-homoserine to L-homoserine phosphate. In Thermoplasma volcanium (strain ATCC 51530 / DSM 4299 / JCM 9571 / NBRC 15438 / GSS1), this protein is Homoserine kinase.